Consider the following 379-residue polypeptide: Bifunctional riboflavin kinase/FMN phosphatase (379 aa).

An N-acetylserine modification is found at Ser-2. Asp-17 (nucleophile; for FMN phosphatase activity) is an active-site residue. Asp-17 and Asp-19 together coordinate Mg(2+). Residue Asp-19 is the Proton donor; for FMN phosphatase activity of the active site. Gly-248, Lys-254, Thr-260, and Asn-262 together coordinate ATP. Residue Thr-260 coordinates Mg(2+). Residue Glu-312 is the Nucleophile; for riboflavin kinase activity of the active site. Residues Leu-315, His-317, and Tyr-324 each contribute to the ATP site. Arg-337 and Phe-342 together coordinate FMN.

It in the N-terminal section; belongs to the HAD-like hydrolase superfamily. CbbY/CbbZ/Gph/YieH family. This sequence in the C-terminal section; belongs to the flavokinase family. In terms of assembly, monomer. Mg(2+) is required as a cofactor.

It catalyses the reaction riboflavin + ATP = FMN + ADP + H(+). The catalysed reaction is FMN + H2O = riboflavin + phosphate. It participates in cofactor biosynthesis; FMN biosynthesis; FMN from riboflavin (ATP route): step 1/1. Functionally, bifunctional enzyme that catalyzes the hydrolysis of flavin-mononucleotide (FMN) to riboflavin (vitamin B2) and the phosphorylation of riboflavin to form (FMN) coenzyme. This chain is Bifunctional riboflavin kinase/FMN phosphatase, found in Arabidopsis thaliana (Mouse-ear cress).